Consider the following 546-residue polypeptide: MNKRAMLGAIGLAFGLMAWPFGASAKEKSMVWNEQWKTPSFVSGSLLKGEDAPEELVYRYLDQEKNTFQLGGQARERLSLIGKQTDELGHTVMRFEQRYRGIPVYGAVLVAHVNDGELSSLSGTLIPNLDKRTLKTEAAISIQQAEMIAKQDVADAVTKERPAAEEGKPTRLVIYPDGETPRLAYEVNVRFLTPVPGNWIYMIDAADGKVLNKWNQMDEAKPGGGQPVAGTSTVGVGRGVLGDQKYINTTYSSYYGYYYLQDNTRGSGIFTYDGRNRTVLPGSLWADGDNQFFASYDAAAVDAHYYAGVVYDYYKNVHGRLSYDGSNAAIRSTVHYGRGYNNAFWNGSQMVYGDGDGQTFLPFSGGIDVVGHELTHAVTDYTAGLVYQNESGAINEAMSDIFGTLVEFYANRNPDWEIGEDIYTPGIAGDALRSMSDPAKYGDPDHYSKRYTGTQDNGGVHTNSGIINKAAYLLSQGGVHYGVSVTGIGRDKMGKIFYRALVYYLTPTSNFSQLRAACVQAAADLYGSTSQEVNSVKQAFNAVGVY.

The signal sequence occupies residues 1–25 (MNKRAMLGAIGLAFGLMAWPFGASA). The propeptide at 26 to 228 (KEKSMVWNEQ…EAKPGGGQPV (203 aa)) is activation peptide. Positions 287, 289, 291, and 368 each coordinate Ca(2+). H372 provides a ligand contact to Zn(2+). Residue E373 is part of the active site. Residues H376 and E396 each contribute to the Zn(2+) site. Ca(2+) contacts are provided by E407, N413, D415, E417, E420, Y423, T424, I427, and D430. Residue H461 is the Proton donor of the active site.

This sequence belongs to the peptidase M4 family. Ca(2+) is required as a cofactor. Zn(2+) serves as cofactor.

Its subcellular location is the secreted. The enzyme catalyses Preferential cleavage: Xaa-|-Leu &gt; Xaa-|-Phe.. In terms of biological role, extracellular zinc metalloprotease. The protein is Thermolysin of Alicyclobacillus acidocaldarius subsp. acidocaldarius (Bacillus acidocaldarius).